We begin with the raw amino-acid sequence, 379 residues long: Beta sliding clamp (379 aa).

It belongs to the beta sliding clamp family. In terms of assembly, forms a ring-shaped head-to-tail homodimer around DNA which binds and tethers DNA polymerases and other proteins to the DNA. The DNA replisome complex has a single clamp-loading complex (3 tau and 1 each of delta, delta', psi and chi subunits) which binds 3 Pol III cores (1 core on the leading strand and 2 on the lagging strand) each with a beta sliding clamp dimer. Additional proteins in the replisome are other copies of gamma, psi and chi, Ssb, DNA helicase and RNA primase.

The protein resides in the cytoplasm. Its function is as follows. Confers DNA tethering and processivity to DNA polymerases and other proteins. Acts as a clamp, forming a ring around DNA (a reaction catalyzed by the clamp-loading complex) which diffuses in an ATP-independent manner freely and bidirectionally along dsDNA. Initially characterized for its ability to contact the catalytic subunit of DNA polymerase III (Pol III), a complex, multichain enzyme responsible for most of the replicative synthesis in bacteria; Pol III exhibits 3'-5' exonuclease proofreading activity. The beta chain is required for initiation of replication as well as for processivity of DNA replication. This is Beta sliding clamp (dnaN) from Rickettsia felis (strain ATCC VR-1525 / URRWXCal2) (Rickettsia azadi).